The following is a 257-amino-acid chain: Probable enoyl-CoA hydratase (257 aa).

It belongs to the enoyl-CoA hydratase/isomerase family.

The enzyme catalyses a (3S)-3-hydroxyacyl-CoA = a (2E)-enoyl-CoA + H2O. The catalysed reaction is a 4-saturated-(3S)-3-hydroxyacyl-CoA = a (3E)-enoyl-CoA + H2O. In terms of biological role, could possibly oxidize fatty acids using specific components. The sequence is that of Probable enoyl-CoA hydratase (fadB1) from Rhizobium meliloti (strain 1021) (Ensifer meliloti).